The chain runs to 606 residues: NADH-ubiquinone oxidoreductase chain 5 (606 aa).

The next 14 membrane-spanning stretches (helical) occupy residues 1-21, 43-63, 87-107, 117-137, 140-160, 171-191, 241-261, 273-293, 310-330, 365-385, 409-429, 457-477, 488-508, and 582-602; these read MNMF…PIIM, AFMI…ETII, MIFV…SMWY, FFKY…ANNM, LFIG…WWYG, AVLY…WFLL, TPVS…FLLI, IQTL…ICAL, LGLM…LHIC, VLPF…GMPF, LLIT…IMFF, LLIG…PTTI, MTAL…NLTT, and GLIK…LLIL.

Belongs to the complex I subunit 5 family. As to quaternary structure, core subunit of respiratory chain NADH dehydrogenase (Complex I) which is composed of 45 different subunits.

The protein resides in the mitochondrion inner membrane. The catalysed reaction is a ubiquinone + NADH + 5 H(+)(in) = a ubiquinol + NAD(+) + 4 H(+)(out). In terms of biological role, core subunit of the mitochondrial membrane respiratory chain NADH dehydrogenase (Complex I) which catalyzes electron transfer from NADH through the respiratory chain, using ubiquinone as an electron acceptor. Essential for the catalytic activity and assembly of complex I. This is NADH-ubiquinone oxidoreductase chain 5 (MT-ND5) from Canis lupus (Gray wolf).